Here is a 634-residue protein sequence, read N- to C-terminus: Ras and EF-hand domain-containing protein homolog (634 aa).

EF-hand domains lie at D5 to L33 and L33 to H68. D46, D48, S50, K52, and E57 together coordinate Ca(2+). Positions L169–E310 form a coiled coil. Disordered stretches follow at residues E216–E237 and Q308–V328. GTP is bound by residues A449–S454, N552–D555, and A585–L586. Positions R632–S634 are cleaved as a propeptide — removed in mature form.

Belongs to the small GTPase superfamily. Rab family. As to quaternary structure, homodimer.

It is found in the cytoplasm. It localises to the perinuclear region. Binds GTP and GDP. Plays a role in uterine seam cell development. The polypeptide is Ras and EF-hand domain-containing protein homolog (Caenorhabditis briggsae).